The following is a 341-amino-acid chain: G2/mitotic-specific cyclin C13-1 (341 aa).

The protein belongs to the cyclin family. Cyclin AB subfamily.

In terms of biological role, essential for the control of the cell cycle at the G2/M (mitosis) transition. Interacts with the CDC2 and CDK2 protein kinases to form MPF. G2/M cyclins accumulate steadily during G2 and are abruptly destroyed at mitosis. The protein is G2/mitotic-specific cyclin C13-1 of Daucus carota (Wild carrot).